Here is a 129-residue protein sequence, read N- to C-terminus: Prefoldin subunit 6 (129 aa).

An N-acetylalanine modification is found at Ala-2. The residue at position 21 (Lys-21) is an N6-acetyllysine. Lys-66 is subject to N6-acetyllysine; alternate. Lys-66 participates in a covalent cross-link: Glycyl lysine isopeptide (Lys-Gly) (interchain with G-Cter in SUMO1); alternate. Residue Lys-66 forms a Glycyl lysine isopeptide (Lys-Gly) (interchain with G-Cter in SUMO2); alternate linkage.

The protein belongs to the prefoldin subunit beta family. Heterohexamer of two PFD-alpha type and four PFD-beta type subunits. Component of the PAQosome complex which is responsible for the biogenesis of several protein complexes and which consists of R2TP complex members RUVBL1, RUVBL2, RPAP3 and PIH1D1, URI complex members PFDN2, PFDN6, PDRG1, UXT and URI1 as well as ASDURF, POLR2E and DNAAF10/WDR92.

In terms of biological role, binds specifically to cytosolic chaperonin (c-CPN) and transfers target proteins to it. Binds to nascent polypeptide chain and promotes folding in an environment in which there are many competing pathways for nonnative proteins. This Canis lupus familiaris (Dog) protein is Prefoldin subunit 6 (PFDN6).